The primary structure comprises 100 residues: MKLSPVEQEKLLLHVAGELALKRKARGLKLNYPEAVALISSFIMEGARDGKTVAQLMSEAKHVLTAEDVMEGVGDMISDVQVECTFPDGTKLVTVHRPIQ.

Belongs to the urease gamma subunit family. As to quaternary structure, heterotrimer of UreA (gamma), UreB (beta) and UreC (alpha) subunits. Three heterotrimers associate to form the active enzyme.

It localises to the cytoplasm. It carries out the reaction urea + 2 H2O + H(+) = hydrogencarbonate + 2 NH4(+). The protein operates within nitrogen metabolism; urea degradation; CO(2) and NH(3) from urea (urease route): step 1/1. The polypeptide is Urease subunit gamma (Lysinibacillus sphaericus (strain C3-41)).